A 158-amino-acid polypeptide reads, in one-letter code: Ribonucleases P/MRP protein subunit POP6 (158 aa).

The stretch at 51–71 forms a coiled coil; the sequence is KNDNIKKSVNKLDKQINMADR.

Component of nuclear RNase P and RNase MRP complexes. RNase P consists of an RNA moiety and at least 9 protein subunits including POP1, POP3, POP4, POP5, POP6, POP7, POP8, RPP1 and RPR2. RNase MRP complex consists of an RNA moiety and at least 10 protein subunits including POP1, POP3, POP4, POP5, POP6, POP7, POP8, RMP1, RPP1 and SNM1, many of which are shared with the RNase P complex.

The protein resides in the nucleus. It catalyses the reaction Endonucleolytic cleavage of RNA, removing 5'-extranucleotides from tRNA precursor.. In terms of biological role, component of ribonuclease P, a protein complex that generates mature tRNA molecules by cleaving their 5'-ends. Also a component of RNase MRP, which cleaves pre-rRNA sequences. This chain is Ribonucleases P/MRP protein subunit POP6 (POP6), found in Saccharomyces cerevisiae (strain ATCC 204508 / S288c) (Baker's yeast).